We begin with the raw amino-acid sequence, 48 residues long: Large ribosomal subunit protein bL33A (48 aa).

It belongs to the bacterial ribosomal protein bL33 family.

This chain is Large ribosomal subunit protein bL33A, found in Exiguobacterium sibiricum (strain DSM 17290 / CCUG 55495 / CIP 109462 / JCM 13490 / 255-15).